The primary structure comprises 187 residues: Elongation factor P (187 aa).

K33 is subject to N6-(3,6-diaminohexanoyl)-5-hydroxylysine.

This sequence belongs to the elongation factor P family. Post-translationally, may be beta-lysylated on the epsilon-amino group of Lys-33 by the combined action of EpmA and EpmB, and then hydroxylated on the C5 position of the same residue by EpmC (if this protein is present). Lysylation is critical for the stimulatory effect of EF-P on peptide-bond formation. The lysylation moiety may extend toward the peptidyltransferase center and stabilize the terminal 3-CCA end of the tRNA. Hydroxylation of the C5 position on Lys-33 may allow additional potential stabilizing hydrogen-bond interactions with the P-tRNA.

It localises to the cytoplasm. It functions in the pathway protein biosynthesis; polypeptide chain elongation. In terms of biological role, involved in peptide bond synthesis. Alleviates ribosome stalling that occurs when 3 or more consecutive Pro residues or the sequence PPG is present in a protein, possibly by augmenting the peptidyl transferase activity of the ribosome. Modification of Lys-33 is required for alleviation. This chain is Elongation factor P, found in Blochmanniella floridana.